The chain runs to 536 residues: Peptide chain release factor 3 (536 aa).

The 269-residue stretch at 13–281 (SHRRTFAIIS…ALIDWAPAPQ (269 aa)) folds into the tr-type G domain. Residues 22 to 29 (SHPDAGKT), 90 to 94 (DTPGH), and 144 to 147 (NKCD) contribute to the GTP site.

The protein belongs to the TRAFAC class translation factor GTPase superfamily. Classic translation factor GTPase family. PrfC subfamily.

It localises to the cytoplasm. Its function is as follows. Increases the formation of ribosomal termination complexes and stimulates activities of RF-1 and RF-2. It binds guanine nucleotides and has strong preference for UGA stop codons. It may interact directly with the ribosome. The stimulation of RF-1 and RF-2 is significantly reduced by GTP and GDP, but not by GMP. The polypeptide is Peptide chain release factor 3 (Chromobacterium violaceum (strain ATCC 12472 / DSM 30191 / JCM 1249 / CCUG 213 / NBRC 12614 / NCIMB 9131 / NCTC 9757 / MK)).